The primary structure comprises 300 residues: Putative heme-binding peroxidase (300 aa).

Histidine 39 acts as the Proton acceptor in catalysis. Disordered stretches follow at residues 44-64 (YDKS…EAEG) and 116-135 (GRTD…LPDA). The segment covering 116-126 (GRTDFADDSRV) has biased composition (basic and acidic residues). Residue histidine 163 coordinates heme b. Tryptophan 179 functions as the Tryptophan radical intermediate in the catalytic mechanism.

It belongs to the peroxidase family. Cytochrome c peroxidase subfamily. Heme b is required as a cofactor.

Destroys radicals which are normally produced within the cells and which are toxic to biological systems. This chain is Putative heme-binding peroxidase, found in Pyricularia oryzae (strain 70-15 / ATCC MYA-4617 / FGSC 8958) (Rice blast fungus).